The sequence spans 327 residues: ATP-dependent 6-phosphofructokinase (327 aa).

ATP is bound by residues G12, 73 to 74 (RL), and 103 to 106 (GDGS). D104 contributes to the Mg(2+) binding site. 126-128 (TID) lines the substrate pocket. The active-site Proton acceptor is the D128. R155 is a binding site for ADP. Substrate is bound by residues R163 and 170 to 172 (MGH). ADP-binding positions include 186-188 (GAD) and 214-216 (KRS). Residues E223, R245, and 251–254 (HTQR) each bind substrate.

This sequence belongs to the phosphofructokinase type A (PFKA) family. ATP-dependent PFK group I subfamily. Prokaryotic clade 'B1' sub-subfamily. Homotetramer. Requires Mg(2+) as cofactor.

The protein localises to the cytoplasm. It carries out the reaction beta-D-fructose 6-phosphate + ATP = beta-D-fructose 1,6-bisphosphate + ADP + H(+). It participates in carbohydrate degradation; glycolysis; D-glyceraldehyde 3-phosphate and glycerone phosphate from D-glucose: step 3/4. With respect to regulation, allosterically activated by ADP and other diphosphonucleosides, and allosterically inhibited by phosphoenolpyruvate. Its function is as follows. Catalyzes the phosphorylation of D-fructose 6-phosphate to fructose 1,6-bisphosphate by ATP, the first committing step of glycolysis. The polypeptide is ATP-dependent 6-phosphofructokinase (Spiroplasma citri).